Reading from the N-terminus, the 362-residue chain is E3 ubiquitin-protein ligase TM129 (362 aa).

The Lumenal portion of the chain corresponds to 1–6; the sequence is MDSPEV. A helical membrane pass occupies residues 7–27; the sequence is TFTLAYLVFAVCFVFTPNEFY. Residues 28 to 56 lie on the Cytoplasmic side of the membrane; that stretch reads SAGLTVQNLLSGWLGSEDAAFVPYHLRRT. A helical transmembrane segment spans residues 57–77; sequence SATLLCHSLLPLGYYMGMCFA. Residues 78-94 lie on the Lumenal side of the membrane; sequence ASEKQLYSPGQAPEAWQ. Residues 95–115 form a helical membrane-spanning segment; sequence LFLLLAVTLPLLSCTLIYYWS. The Cytoplasmic portion of the chain corresponds to 116–362; it reads WDRWTRHPLA…FCILDVCCVR (247 aa). The RING-type; degenerate zinc finger occupies 285 to 350; the sequence is CIGCMQTRAS…ASRVPCPTCR (66 aa).

The protein belongs to the TMEM129 family. In terms of assembly, integral component of ER-resident dislocation complexes.

It localises to the endoplasmic reticulum membrane. The enzyme catalyses S-ubiquitinyl-[E2 ubiquitin-conjugating enzyme]-L-cysteine + [acceptor protein]-L-lysine = [E2 ubiquitin-conjugating enzyme]-L-cysteine + N(6)-ubiquitinyl-[acceptor protein]-L-lysine.. It participates in protein modification; protein ubiquitination. In terms of biological role, E3 ubiquitin-protein ligase involved in ER-associated protein degradation, preferentially associates with the E2 enzyme UBE2J2. Exploited by viral US11 proteins to mediate HLA class I proteins degradation. This chain is E3 ubiquitin-protein ligase TM129 (Tmem129), found in Mus musculus (Mouse).